The following is a 121-amino-acid chain: Glycine cleavage system H protein (121 aa).

In terms of domain architecture, Lipoyl-binding spans 16–98 (VATIGITAHA…EAGGWFAKVR (83 aa)). At Lys-57 the chain carries N6-lipoyllysine.

It belongs to the GcvH family. As to quaternary structure, the glycine cleavage system is composed of four proteins: P, T, L and H. The cofactor is (R)-lipoate.

Functionally, the glycine cleavage system catalyzes the degradation of glycine. The H protein shuttles the methylamine group of glycine from the P protein to the T protein. The polypeptide is Glycine cleavage system H protein (Phenylobacterium zucineum (strain HLK1)).